The chain runs to 283 residues: MKQYLDLCQRIIDEGTWVENSRTGKRCLTVINADLVYNVDKNEFPLITTRKSFYKAAIAELLGYIRGYDNAADFRKIGCNTWNANANDNQAWLNNPHRKGVDDMGRVYGVQGRAWSKPDGGTIDQLRKIVDDLSKGIDDRGEILSFYNPGEFHMGCLRPCMHTHNFSLLGDTLHLTSFQRSCDVPLGLNFNQVQVFTLLALMAQITGHKAGTAFHKIVNAHIYEDQLELMRDVQIKREPLSSPKLVINPDIKSLEDLETWVTMDDFEVTGYEHHEAIKYPFSV.

A dUMP-binding site is contributed by Arg22. Cys160 (nucleophile) is an active-site residue. DUMP is bound by residues Arg180 to Asp183, Asn191, and His221 to Tyr223. Asp183 lines the (6R)-5,10-methylene-5,6,7,8-tetrahydrofolate pocket. Ser282 contacts (6R)-5,10-methylene-5,6,7,8-tetrahydrofolate.

This sequence belongs to the thymidylate synthase family. Bacterial-type ThyA subfamily. Homodimer.

It localises to the cytoplasm. It carries out the reaction dUMP + (6R)-5,10-methylene-5,6,7,8-tetrahydrofolate = 7,8-dihydrofolate + dTMP. The protein operates within pyrimidine metabolism; dTTP biosynthesis. Catalyzes the reductive methylation of 2'-deoxyuridine-5'-monophosphate (dUMP) to 2'-deoxythymidine-5'-monophosphate (dTMP) while utilizing 5,10-methylenetetrahydrofolate (mTHF) as the methyl donor and reductant in the reaction, yielding dihydrofolate (DHF) as a by-product. This enzymatic reaction provides an intracellular de novo source of dTMP, an essential precursor for DNA biosynthesis. This chain is Thymidylate synthase, found in Shewanella halifaxensis (strain HAW-EB4).